The sequence spans 211 residues: Interleukin-6 (211 aa).

A signal peptide spans 1 to 24 (MKFLSARDFHPVAFLGLMLVTTTA). Disulfide bonds link Cys-70/Cys-76 and Cys-99/Cys-109.

The protein belongs to the IL-6 superfamily. In terms of assembly, component of a hexamer of two molecules each of IL6, IL6R and IL6ST; first binds to IL6R to associate with the signaling subunit IL6ST. Interacts with IL6R (via the N-terminal ectodomain); this interaction may be affected by IL6R-binding with SORL1, hence decreasing IL6 cis signaling. Interacts with SORL1 (via the N-terminal ectodomain); this interaction leads to IL6 internalization and lysosomal degradation. May form a trimeric complex with the soluble SORL1 ectodomain and soluble IL6R receptor; this interaction might stabilize circulating IL6, hence promoting IL6 trans signaling. Post-translationally, N- and O-glycosylated. Expressed by dendritic cells and macrophages. Expressed by activated follicular B cells. Abundantly expressed in the central nervous system (CNS), particularly the hypothalamic region.

The protein resides in the secreted. In terms of biological role, cytokine with a wide variety of biological functions in immunity, tissue regeneration, and metabolism. Binds to IL6R, then the complex associates to the signaling subunit IL6ST/gp130 to trigger the intracellular IL6-signaling pathway. The interaction with the membrane-bound IL6R and IL6ST stimulates 'classic signaling', whereas the binding of IL6 and soluble IL6R to IL6ST stimulates 'trans-signaling'. Alternatively, 'cluster signaling' occurs when membrane-bound IL6:IL6R complexes on transmitter cells activate IL6ST receptors on neighboring receiver cells. IL6 is a potent inducer of the acute phase response. Rapid production of IL6 contributes to host defense during infection and tissue injury, but excessive IL6 synthesis is involved in disease pathology. In the innate immune response, is synthesized by myeloid cells, such as macrophages and dendritic cells, upon recognition of pathogens through toll-like receptors (TLRs) at the site of infection or tissue injury. In the adaptive immune response, is required for the differentiation of B-cells into immunoglolin-secreting cells. Plays a major role in the differentiation of CD4(+) T cell subsets. Essential factor for the development of T follicular helper (Tfh) cells that are required for the induction of germinal-center formation. Together with IL21, controls the early generation of Tfh cells and are critical for an effective antibody response to acute viral infection. Required to drive naive CD4(+) T cells to the Th17 lineage, through 'cluster signaling' by dendritic cells. Also required for proliferation of myeloma cells and the survival of plasmablast cells. Its function is as follows. Acts as an essential factor in bone homeostasis and on vessels directly or indirectly by induction of VEGF, resulting in increased angiogenesis activity and vascular permeability. Induces, through 'trans-signaling' and synergistically with IL1B and TNF, the production of VEGF. Involved in metabolic controls, is discharged into the bloodstream after muscle contraction increasing lipolysis and improving insulin resistance. 'Trans-signaling' in central nervous system regulates energy and glucose homeostasis. Mediates, through GLP-1, crosstalk between insulin-sensitive tissues, intestinal L cells and pancreatic islets to adapt to changes in insulin demand. Also acts as a myokine. Plays a protective role during liver injury, being required for maintenance of tissue regeneration. Also has a pivotal role in iron metabolism by regulating HAMP/hepcidin expression upon inflammation or bacterial infection. Through activation of IL6ST-YAP-NOTCH pathway, induces inflammation-induced epithelial regeneration. The sequence is that of Interleukin-6 from Mus musculus (Mouse).